The sequence spans 63 residues: Large ribosomal subunit protein uL29 (63 aa).

The protein belongs to the universal ribosomal protein uL29 family.

This chain is Large ribosomal subunit protein uL29, found in Pectobacterium carotovorum subsp. carotovorum (strain PC1).